The sequence spans 626 residues: UPF0313 protein MM_1287 (626 aa).

A disordered region spans residues 206–227 (GKGKEKAGEQDESENATEEVAK). One can recognise a Radical SAM core domain in the interval 320-589 (ALEMVKFSLT…AMQRALMHYR (270 aa)). [4Fe-4S] cluster is bound by residues Cys334, Cys338, and Cys341.

The protein belongs to the UPF0313 family. The cofactor is [4Fe-4S] cluster.

The chain is UPF0313 protein MM_1287 from Methanosarcina mazei (strain ATCC BAA-159 / DSM 3647 / Goe1 / Go1 / JCM 11833 / OCM 88) (Methanosarcina frisia).